The primary structure comprises 160 residues: Serine-protein kinase RsbW (160 aa).

It belongs to the anti-sigma-factor family.

It carries out the reaction L-seryl-[protein] + ATP = O-phospho-L-seryl-[protein] + ADP + H(+). The enzyme catalyses L-threonyl-[protein] + ATP = O-phospho-L-threonyl-[protein] + ADP + H(+). Negative regulator of sigma-B activity. Phosphorylates and inactivates its specific antagonist protein, RsbV. Upon phosphorylation of RsbV, RsbW is released and binds to sigma-B, thereby blocking its ability to form an RNA polymerase holoenzyme (E-sigma-B). This Bacillus cereus (strain Q1) protein is Serine-protein kinase RsbW.